The sequence spans 500 residues: Trehalose-6-phosphate synthase (500 aa).

Residue Arg28 participates in D-glucose 6-phosphate binding. Residue 48 to 49 (GG) participates in UDP-alpha-D-glucose binding. Residues Tyr108 and Asp162 each contribute to the D-glucose 6-phosphate site. The UDP-alpha-D-glucose site is built by Arg304 and Lys309. Arg342 is a binding site for D-glucose 6-phosphate. 407 to 411 (LVAKE) lines the UDP-alpha-D-glucose pocket.

It belongs to the glycosyltransferase 20 family. Homotetramer.

It carries out the reaction ADP-alpha-D-glucose + D-glucose 6-phosphate = alpha,alpha-trehalose 6-phosphate + ADP + H(+). The enzyme catalyses CDP-alpha-D-glucose + D-glucose 6-phosphate = alpha,alpha-trehalose 6-phosphate + CDP + H(+). The catalysed reaction is GDP-alpha-D-glucose + D-glucose 6-phosphate = alpha,alpha-trehalose 6-phosphate + GDP + H(+). It catalyses the reaction TDP-alpha-D-glucose + D-glucose 6-phosphate = 5-methyl-UDP + alpha,alpha-trehalose 6-phosphate + H(+). It carries out the reaction D-glucose 6-phosphate + UDP-alpha-D-glucose = alpha,alpha-trehalose 6-phosphate + UDP + H(+). It functions in the pathway glycan biosynthesis; trehalose biosynthesis. Its function is as follows. Probably involved in the osmoprotection via the biosynthesis of trehalose and in the production of glycogen and alpha-glucan via the TreS-Pep2 branch involved in the biosynthesis of maltose-1-phosphate (M1P). Catalyzes the transfer of glucose from UDP-glucose (UDP-Glc) to D-glucose 6-phosphate (Glc-6-P) to form trehalose-6-phosphate. Probably also able to use ADP-Glc, CDP-Glc, GDP-Glc and TDP-Glc as glucosyl donors. The protein is Trehalose-6-phosphate synthase of Mycobacterium bovis (strain ATCC BAA-935 / AF2122/97).